A 299-amino-acid polypeptide reads, in one-letter code: Nicotinate-nucleotide pyrophosphorylase [carboxylating] (299 aa).

Residues 8–12 (LLLPP) form an important for hexamer formation region. Quinolinate contacts are provided by residues Arg102, 138–139 (RK), 160–161 (HR), Lys171, Glu201, Asp222, 248–250 (SGG), and Gly270.

Belongs to the NadC/ModD family. As to quaternary structure, hexamer formed by 3 homodimers.

The catalysed reaction is nicotinate beta-D-ribonucleotide + CO2 + diphosphate = quinolinate + 5-phospho-alpha-D-ribose 1-diphosphate + 2 H(+). The protein operates within cofactor biosynthesis; NAD(+) biosynthesis; nicotinate D-ribonucleotide from quinolinate: step 1/1. Involved in the catabolism of quinolinic acid (QA). This is Nicotinate-nucleotide pyrophosphorylase [carboxylating] from Sus scrofa (Pig).